We begin with the raw amino-acid sequence, 309 residues long: GTP cyclohydrolase MptA 2 (309 aa).

Belongs to the GTP cyclohydrolase IV family. As to quaternary structure, homodimer. The cofactor is Fe(2+).

It carries out the reaction GTP + H2O = 7,8-dihydroneopterin 2',3'-cyclic phosphate + formate + diphosphate + H(+). It functions in the pathway cofactor biosynthesis; 5,6,7,8-tetrahydromethanopterin biosynthesis. In terms of biological role, converts GTP to 7,8-dihydro-D-neopterin 2',3'-cyclic phosphate, the first intermediate in the biosynthesis of coenzyme methanopterin. The polypeptide is GTP cyclohydrolase MptA 2 (Methanocella arvoryzae (strain DSM 22066 / NBRC 105507 / MRE50)).